A 244-amino-acid polypeptide reads, in one-letter code: Dihydropteridine reductase (244 aa).

An N-acetylalanine modification is found at Ala-2. 14–38 (LVYGGRGALGSRCVQAFRARNWWVA) provides a ligand contact to NADP(+). An N6-succinyllysine mark is found at Lys-73, Lys-79, Lys-96, and Lys-102. The active-site Proton acceptor is the Tyr-150.

Belongs to the short-chain dehydrogenases/reductases (SDR) family. As to quaternary structure, homodimer.

The enzyme catalyses 5,6,7,8-tetrahydropteridine + NAD(+) = 6,7-dihydropteridine + NADH + H(+). It catalyses the reaction 5,6,7,8-tetrahydropteridine + NADP(+) = 6,7-dihydropteridine + NADPH + H(+). Functionally, catalyzes the conversion of quinonoid dihydrobiopterin into tetrahydrobiopterin. The sequence is that of Dihydropteridine reductase (QDPR) from Homo sapiens (Human).